The chain runs to 403 residues: Aspartate aminotransferase, cytoplasmic isozyme 2 (403 aa).

Methionine 1 is subject to N-acetylmethionine. L-aspartate is bound by residues glycine 37, tryptophan 132, and asparagine 185. An N6-(pyridoxal phosphate)lysine modification is found at lysine 249. Arginine 377 provides a ligand contact to L-aspartate.

The protein belongs to the class-I pyridoxal-phosphate-dependent aminotransferase family. In terms of assembly, homodimer. Pyridoxal 5'-phosphate serves as cofactor.

Its subcellular location is the cytoplasm. It carries out the reaction L-aspartate + 2-oxoglutarate = oxaloacetate + L-glutamate. Important for the metabolism of amino acids and Krebs-cycle related organic acids. In plants, it is involved in nitrogen metabolism and in aspects of carbon and energy metabolism. The polypeptide is Aspartate aminotransferase, cytoplasmic isozyme 2 (ASP4) (Arabidopsis thaliana (Mouse-ear cress)).